Consider the following 210-residue polypeptide: High mobility group protein B2 (210 aa).

K3 carries the N6-acetyllysine modification. Positions 9–79 (PRGKMSSYAF…RYDREMKNYV (71 aa)) form a DNA-binding region, HMG box 1. C23 is modified (cysteine sulfonic acid (-SO3H); alternate). Residues C23 and C45 are joined by a disulfide bond. An N6-acetyllysine modification is found at K30. S35 is modified (phosphoserine). The residue at position 43 (K43) is an N6-acetyllysine. C45 is modified (cysteine sulfonic acid (-SO3H); alternate). The span at 51-76 (TMSAKEKSKFEDLAKSDKARYDREMK) shows a compositional bias: basic and acidic residues. The interval 51 to 102 (TMSAKEKSKFEDLAKSDKARYDREMKNYVPPKGDKKGKKKDPNAPKRPPSAF) is disordered. K90 carries the N6-acetyllysine modification. The HMG box 2 DNA-binding region spans 95 to 163 (PKRPPSAFFL…KYEKDIAAYR (69 aa)). Position 100 is a phosphoserine (S100). Residue C106 is modified to Cysteine sulfonic acid (-SO3H). 2 positions are modified to N6-acetyllysine: K114 and K141. Basic and acidic residues predominate over residues 162-172 (YRAKGKSEVGK). The disordered stretch occupies residues 162–210 (YRAKGKSEVGKKGPGRPTGSKKKNEPEDEEEEEEEEDDEDEEEEDEDEE). The required for chemotactic activity stretch occupies residues 165–180 (KGKSEVGKKGPGRPTG). Residues 187–210 (PEDEEEEEEEEDDEDEEEEDEDEE) are compositionally biased toward acidic residues.

It belongs to the HMGB family. Interacts with POU2F2, POU2F1 and POU3F1. Component of the RAG complex composed of core components RAG1 and RAG2, and associated component HMGB1 or HMGB2. Component of the SET complex, composed of at least ANP32A, APEX1, HMGB2, NME1, SET and TREX1. Directly interacts with SET. Interacts with LEF1. Post-translationally, reduction/oxidation of cysteine residues Cys-23, Cys-45 and Cys-106 and a possible intramolecular disulfide bond involving Cys-23 and Cys-45 give rise to different redox forms with specific functional activities in various cellular compartments: 1- fully reduced HMGB2 (HMGB2C23hC45hC106h), 2- disulfide HMGB2 (HMGB2C23-C45C106h) and 3- sulfonyl HMGB2 (HMGB2C23soC45soC106so).

Its subcellular location is the nucleus. The protein localises to the chromosome. It is found in the cytoplasm. It localises to the secreted. In terms of biological role, multifunctional protein with various roles in different cellular compartments. May act in a redox sensitive manner. In the nucleus is an abundant chromatin-associated non-histone protein involved in transcription, chromatin remodeling and V(D)J recombination and probably other processes. Binds DNA with a preference to non-canonical DNA structures such as single-stranded DNA. Can bent DNA and enhance DNA flexibility by looping thus providing a mechanism to promote activities on various gene promoters by enhancing transcription factor binding and/or bringing distant regulatory sequences into close proximity. Involved in V(D)J recombination by acting as a cofactor of the RAG complex: acts by stimulating cleavage and RAG protein binding at the 23 bp spacer of conserved recombination signal sequences (RSS). Proposed to be involved in the innate immune response to nucleic acids by acting as a cytoplasmic promiscuous immunogenic DNA/RNA sensor which cooperates with subsequent discriminative sensing by specific pattern recognition receptors. In the extracellular compartment acts as a chemokine. Promotes proliferation and migration of endothelial cells implicating AGER/RAGE. Has antimicrobial activity in gastrointestinal epithelial tissues. Involved in inflammatory response to antigenic stimulus coupled with pro-inflammatory activity. May play a role in germ cell differentiation. Involved in modulation of neurogenesis probably by regulation of neural stem proliferation. Involved in articular cartilage surface maintenance implicating LEF1 and the Wnt/beta-catenin pathway. The sequence is that of High mobility group protein B2 (Hmgb2) from Rattus norvegicus (Rat).